A 134-amino-acid chain; its full sequence is ATP synthase epsilon chain, chloroplastic (134 aa).

It belongs to the ATPase epsilon chain family. As to quaternary structure, F-type ATPases have 2 components, CF(1) - the catalytic core - and CF(0) - the membrane proton channel. CF(1) has five subunits: alpha(3), beta(3), gamma(1), delta(1), epsilon(1). CF(0) has three main subunits: a, b and c.

It localises to the plastid. The protein localises to the chloroplast thylakoid membrane. In terms of biological role, produces ATP from ADP in the presence of a proton gradient across the membrane. This Nymphaea alba (White water-lily) protein is ATP synthase epsilon chain, chloroplastic.